Reading from the N-terminus, the 557-residue chain is Putative inactive polypeptide N-acetylgalactosaminyltransferase 11 (557 aa).

The Cytoplasmic portion of the chain corresponds to 1 to 4 (MKSL). Residues 5 to 27 (LFGTPCSCAIFILVYCIITLFIW) form a helical; Signal-anchor for type II membrane protein membrane-spanning segment. Residues 28 to 557 (FLYTDNLSNA…MRDICLSVNH (530 aa)) are Lumenal-facing. 2 N-linked (GlcNAc...) asparagine glycosylation sites follow: Asn33 and Asn103. 5 cysteine pairs are disulfide-bonded: Cys99-Cys325, Cys316-Cys397, Cys437-Cys450, Cys472-Cys486, and Cys511-Cys526. Residues 109 to 215 (TVTVSIVIAI…RGWLPPLLEP (107 aa)) form a catalytic subdomain A region. An N-linked (GlcNAc...) asparagine glycan is attached at Asn220. A catalytic subdomain B region spans residues 271–333 (PYPSSQLEGR…PCSRVGIIYK (63 aa)). Asn379 carries N-linked (GlcNAc...) asparagine glycosylation. The 102-residue stretch at 456 to 557 (EDWTLTSRCQ…MRDICLSVNH (102 aa)) folds into the Ricin B-type lectin domain.

The protein belongs to the glycosyltransferase 2 family. GalNAc-T subfamily.

The protein resides in the golgi apparatus membrane. Its function is as follows. Probable inactive glycosyltransferase. This is Putative inactive polypeptide N-acetylgalactosaminyltransferase 11 from Drosophila melanogaster (Fruit fly).